The following is a 355-amino-acid chain: UDP-N-acetylglucosamine--N-acetylmuramyl-(pentapeptide) pyrophosphoryl-undecaprenol N-acetylglucosamine transferase (355 aa).

UDP-N-acetyl-alpha-D-glucosamine-binding positions include 13 to 15, Asn125, Arg162, Ser190, Ile244, and Gln289; that span reads TGG.

The protein belongs to the glycosyltransferase 28 family. MurG subfamily.

Its subcellular location is the cell inner membrane. The enzyme catalyses di-trans,octa-cis-undecaprenyl diphospho-N-acetyl-alpha-D-muramoyl-L-alanyl-D-glutamyl-meso-2,6-diaminopimeloyl-D-alanyl-D-alanine + UDP-N-acetyl-alpha-D-glucosamine = di-trans,octa-cis-undecaprenyl diphospho-[N-acetyl-alpha-D-glucosaminyl-(1-&gt;4)]-N-acetyl-alpha-D-muramoyl-L-alanyl-D-glutamyl-meso-2,6-diaminopimeloyl-D-alanyl-D-alanine + UDP + H(+). Its pathway is cell wall biogenesis; peptidoglycan biosynthesis. In terms of biological role, cell wall formation. Catalyzes the transfer of a GlcNAc subunit on undecaprenyl-pyrophosphoryl-MurNAc-pentapeptide (lipid intermediate I) to form undecaprenyl-pyrophosphoryl-MurNAc-(pentapeptide)GlcNAc (lipid intermediate II). This is UDP-N-acetylglucosamine--N-acetylmuramyl-(pentapeptide) pyrophosphoryl-undecaprenol N-acetylglucosamine transferase from Neisseria meningitidis serogroup B (strain ATCC BAA-335 / MC58).